The chain runs to 186 residues: Transcription factor FapR (186 aa).

The protein belongs to the FapR family.

In terms of biological role, transcriptional factor involved in regulation of membrane lipid biosynthesis by repressing genes involved in fatty acid and phospholipid metabolism. In Halalkalibacterium halodurans (strain ATCC BAA-125 / DSM 18197 / FERM 7344 / JCM 9153 / C-125) (Bacillus halodurans), this protein is Transcription factor FapR.